Here is a 253-residue protein sequence, read N- to C-terminus: Small ribosomal subunit protein uS3 (253 aa).

In terms of domain architecture, KH type-2 spans 39 to 107; that stretch reads VRRALKKRLY…EVHLNIVEIR (69 aa). The segment at 215-253 is disordered; sequence LDKRLAGESGPAGEGGGRERGDRPDRGPRRERRGEPSNA. The span at 230-253 shows a compositional bias: basic and acidic residues; it reads GGRERGDRPDRGPRRERRGEPSNA.

It belongs to the universal ribosomal protein uS3 family. Part of the 30S ribosomal subunit. Forms a tight complex with proteins S10 and S14.

Its function is as follows. Binds the lower part of the 30S subunit head. Binds mRNA in the 70S ribosome, positioning it for translation. This chain is Small ribosomal subunit protein uS3, found in Phenylobacterium zucineum (strain HLK1).